We begin with the raw amino-acid sequence, 427 residues long: Glutamate-1-semialdehyde 2,1-aminomutase 1 (427 aa).

Lys-265 carries the post-translational modification N6-(pyridoxal phosphate)lysine.

It belongs to the class-III pyridoxal-phosphate-dependent aminotransferase family. HemL subfamily. In terms of assembly, homodimer. It depends on pyridoxal 5'-phosphate as a cofactor.

It is found in the cytoplasm. The enzyme catalyses (S)-4-amino-5-oxopentanoate = 5-aminolevulinate. It functions in the pathway porphyrin-containing compound metabolism; protoporphyrin-IX biosynthesis; 5-aminolevulinate from L-glutamyl-tRNA(Glu): step 2/2. In Lachnoclostridium phytofermentans (strain ATCC 700394 / DSM 18823 / ISDg) (Clostridium phytofermentans), this protein is Glutamate-1-semialdehyde 2,1-aminomutase 1.